Here is a 212-residue protein sequence, read N- to C-terminus: Pyridoxine/pyridoxamine 5'-phosphate oxidase (212 aa).

Residues 8-11 (RREY) and K66 contribute to the substrate site. FMN is bound by residues 61-66 (RIVLLK), 76-77 (FT), R82, K83, and Q105. The substrate site is built by Y123, R127, and S131. FMN contacts are provided by residues 140–141 (QS) and W185. Substrate is bound at residue 191 to 193 (RLH). Residue R195 participates in FMN binding.

The protein belongs to the pyridoxamine 5'-phosphate oxidase family. Homodimer. It depends on FMN as a cofactor.

The catalysed reaction is pyridoxamine 5'-phosphate + O2 + H2O = pyridoxal 5'-phosphate + H2O2 + NH4(+). The enzyme catalyses pyridoxine 5'-phosphate + O2 = pyridoxal 5'-phosphate + H2O2. It participates in cofactor metabolism; pyridoxal 5'-phosphate salvage; pyridoxal 5'-phosphate from pyridoxamine 5'-phosphate: step 1/1. It functions in the pathway cofactor metabolism; pyridoxal 5'-phosphate salvage; pyridoxal 5'-phosphate from pyridoxine 5'-phosphate: step 1/1. Catalyzes the oxidation of either pyridoxine 5'-phosphate (PNP) or pyridoxamine 5'-phosphate (PMP) into pyridoxal 5'-phosphate (PLP). The protein is Pyridoxine/pyridoxamine 5'-phosphate oxidase of Shewanella amazonensis (strain ATCC BAA-1098 / SB2B).